Consider the following 919-residue polypeptide: Bifunctional uridylyltransferase/uridylyl-removing enzyme (919 aa).

The uridylyltransferase stretch occupies residues 1–373; that stretch reads MTDPKVPRQR…LAGFNAKSRM (373 aa). Residues 374–727 form a uridylyl-removing region; it reads LKGYTVFGGK…CEFDEERGAT (354 aa). The HD domain maps to 489–611; the sequence is VDEHTIRAIG…VQSLERLRHL (123 aa). 2 ACT domains span residues 728 to 811 and 839 to 919; these read LVTV…LAKR and VIEV…LEPA.

Belongs to the GlnD family. Requires Mg(2+) as cofactor.

The enzyme catalyses [protein-PII]-L-tyrosine + UTP = [protein-PII]-uridylyl-L-tyrosine + diphosphate. The catalysed reaction is [protein-PII]-uridylyl-L-tyrosine + H2O = [protein-PII]-L-tyrosine + UMP + H(+). Its activity is regulated as follows. Uridylyltransferase (UTase) activity is inhibited by glutamine, while glutamine activates uridylyl-removing (UR) activity. Functionally, modifies, by uridylylation and deuridylylation, the PII regulatory proteins (GlnB and homologs), in response to the nitrogen status of the cell that GlnD senses through the glutamine level. Under low glutamine levels, catalyzes the conversion of the PII proteins and UTP to PII-UMP and PPi, while under higher glutamine levels, GlnD hydrolyzes PII-UMP to PII and UMP (deuridylylation). Thus, controls uridylylation state and activity of the PII proteins, and plays an important role in the regulation of nitrogen assimilation and metabolism. This chain is Bifunctional uridylyltransferase/uridylyl-removing enzyme, found in Erythrobacter litoralis (strain HTCC2594).